Reading from the N-terminus, the 245-residue chain is tRNA1(Val) (adenine(37)-N6)-methyltransferase (245 aa).

Belongs to the methyltransferase superfamily. tRNA (adenine-N(6)-)-methyltransferase family.

Its subcellular location is the cytoplasm. It catalyses the reaction adenosine(37) in tRNA1(Val) + S-adenosyl-L-methionine = N(6)-methyladenosine(37) in tRNA1(Val) + S-adenosyl-L-homocysteine + H(+). Specifically methylates the adenine in position 37 of tRNA(1)(Val) (anticodon cmo5UAC). The protein is tRNA1(Val) (adenine(37)-N6)-methyltransferase of Salmonella enteritidis PT4 (strain P125109).